The primary structure comprises 295 residues: Cyclic dipyrimidine nucleotide synthase CdnE (295 aa).

Residues Met1–Glu25 form a disordered region. The UTP site is built by Gln51, Ser53, and Asn59. Asp65 and Asp67 together coordinate Mg(2+). The UTP site is built by Asp67, Asp124, and Lys125. 2 residues coordinate Mg(2+): Asp128 and Asp139. Residues Asp139, Asn173, Lys201, and Ser220 each contribute to the UTP site. The Pyrimidine specificity motif (R/Q)xW in donor pocket signature appears at Gln274–Trp276.

Belongs to the CD-NTase family. E02 subfamily. Requires Mg(2+) as cofactor.

The catalysed reaction is 2 UTP = c-di-UMP + 2 diphosphate. The enzyme catalyses UTP + CTP = cyclic CMP-UMP + 2 diphosphate. Its function is as follows. Cyclic nucleotide synthase (second messenger synthase) of a CBASS antivirus system. CBASS (cyclic oligonucleotide-based antiphage signaling system) provides immunity against bacteriophage. The CD-NTase protein synthesizes cyclic nucleotides in response to infection; these serve as specific second messenger signals. The signals activate a diverse range of effectors, leading to bacterial cell death and thus abortive phage infection. A type I-B(UU) CBASS system. Functionally, cyclic dinucleotide synthase that catalyzes the synthesis of 3',3'-cyclic UMP-UMP (c-di-UMP) as the major product, and of 3',3'-cyclic CMP-UMP as a minor product, which are second messengers for cell signal transduction. The polypeptide is Cyclic dipyrimidine nucleotide synthase CdnE (Legionella pneumophila).